The primary structure comprises 70 residues: Bowman-Birk type proteinase inhibitor A7 (70 aa).

4 disulfide bridges follow: C12/C31, C18/C29, C38/C45, and C42/C59.

It belongs to the Bowman-Birk serine protease inhibitor family. As to expression, expressed in bulb (at protein level).

Functionally, serine protease inhibitor. Strongly inhibits trypsin (Ki = 7.1 nM) and almost completely inhibits elastase. Also inhibits chymotrypsin (Ki = 19 nM). Does not inhibit bacterial subtilisin. In Hyacinthus orientalis (Common hyacinth), this protein is Bowman-Birk type proteinase inhibitor A7.